The sequence spans 147 residues: Large ribosomal subunit protein bL9 (147 aa).

It belongs to the bacterial ribosomal protein bL9 family.

Binds to the 23S rRNA. The chain is Large ribosomal subunit protein bL9 from Clostridium kluyveri (strain NBRC 12016).